An 869-amino-acid chain; its full sequence is Probable beta-glucosidase F (869 aa).

A signal peptide spans 1–19; sequence MRVLSAIALVASLASSALS. N-linked (GlcNAc...) asparagine glycosylation is found at Asn77 and Asn261. Asp289 is an active-site residue. 4 N-linked (GlcNAc...) asparagine glycosylation sites follow: Asn332, Asn364, Asn399, and Asn478. Residues 677–697 form a disordered region; the sequence is STYPPTRPPKGPTPTYPTAIP. Residues 681–691 are compositionally biased toward pro residues; the sequence is PTRPPKGPTPT. N-linked (GlcNAc...) asparagine glycosylation is present at Asn728.

It belongs to the glycosyl hydrolase 3 family.

It localises to the secreted. It carries out the reaction Hydrolysis of terminal, non-reducing beta-D-glucosyl residues with release of beta-D-glucose.. It participates in glycan metabolism; cellulose degradation. Its function is as follows. Beta-glucosidases are one of a number of cellulolytic enzymes involved in the degradation of cellulosic biomass. Catalyzes the last step releasing glucose from the inhibitory cellobiose. The polypeptide is Probable beta-glucosidase F (bglF) (Aspergillus fumigatus (strain ATCC MYA-4609 / CBS 101355 / FGSC A1100 / Af293) (Neosartorya fumigata)).